The following is a 160-amino-acid chain: S-adenosylmethionine decarboxylase proenzyme (160 aa).

Catalysis depends on Ser73, which acts as the Schiff-base intermediate with substrate; via pyruvic acid. Ser73 is modified (pyruvic acid (Ser); by autocatalysis). Residue His78 is the Proton acceptor; for processing activity of the active site. Cys93 functions as the Proton donor; for catalytic activity in the catalytic mechanism.

Belongs to the prokaryotic AdoMetDC family. Type 1 subfamily. Heterotetramer of two alpha and two beta chains arranged as a dimer of alpha/beta heterodimers. It depends on pyruvate as a cofactor. Post-translationally, is synthesized initially as an inactive proenzyme. Formation of the active enzyme involves a self-maturation process in which the active site pyruvoyl group is generated from an internal serine residue via an autocatalytic post-translational modification. Two non-identical subunits are generated from the proenzyme in this reaction, and the pyruvate is formed at the N-terminus of the alpha chain, which is derived from the carboxyl end of the proenzyme. The post-translation cleavage follows an unusual pathway, termed non-hydrolytic serinolysis, in which the side chain hydroxyl group of the serine supplies its oxygen atom to form the C-terminus of the beta chain, while the remainder of the serine residue undergoes an oxidative deamination to produce ammonia and the pyruvoyl group blocking the N-terminus of the alpha chain.

The enzyme catalyses S-adenosyl-L-methionine + H(+) = S-adenosyl 3-(methylsulfanyl)propylamine + CO2. It functions in the pathway amine and polyamine biosynthesis; S-adenosylmethioninamine biosynthesis; S-adenosylmethioninamine from S-adenosyl-L-methionine: step 1/1. Functionally, catalyzes the decarboxylation of S-adenosylmethionine to S-adenosylmethioninamine (dcAdoMet), the propylamine donor required for the synthesis of the polyamines spermine and spermidine from the diamine putrescine. The polypeptide is S-adenosylmethionine decarboxylase proenzyme (Pseudomonas paraeruginosa (strain DSM 24068 / PA7) (Pseudomonas aeruginosa (strain PA7))).